We begin with the raw amino-acid sequence, 954 residues long: Glycine dehydrogenase (decarboxylating) (954 aa).

At lysine 706 the chain carries N6-(pyridoxal phosphate)lysine.

Belongs to the GcvP family. The glycine cleavage system is composed of four proteins: P, T, L and H. The cofactor is pyridoxal 5'-phosphate.

The enzyme catalyses N(6)-[(R)-lipoyl]-L-lysyl-[glycine-cleavage complex H protein] + glycine + H(+) = N(6)-[(R)-S(8)-aminomethyldihydrolipoyl]-L-lysyl-[glycine-cleavage complex H protein] + CO2. The glycine cleavage system catalyzes the degradation of glycine. The P protein binds the alpha-amino group of glycine through its pyridoxal phosphate cofactor; CO(2) is released and the remaining methylamine moiety is then transferred to the lipoamide cofactor of the H protein. The sequence is that of Glycine dehydrogenase (decarboxylating) from Pseudomonas syringae pv. syringae (strain B728a).